The sequence spans 516 residues: Golgi-associated kinase 1B (516 aa).

At 1–37 the chain is on the cytoplasmic side; the sequence is MTCPDKLGQLINWFVCSLCAPRVCKLWSSRRPRTRRN. The chain crosses the membrane as a helical; Signal-anchor for type II membrane protein span at residues 38 to 55; that stretch reads LLLGTACAIYLGFLVSQV. Residues 56–516 lie on the Extracellular side of the membrane; that stretch reads GKGSFQHGQA…HGARVLPMNE (461 aa). N-linked (GlcNAc...) asparagine glycosylation occurs at Asn-286.

Belongs to the GASK family.

It is found in the golgi apparatus membrane. This chain is Golgi-associated kinase 1B, found in Rattus norvegicus (Rat).